The sequence spans 306 residues: Protein FdhE homolog (306 aa).

It belongs to the FdhE family.

The protein resides in the cytoplasm. Necessary for formate dehydrogenase activity. The polypeptide is Protein FdhE homolog (Glaesserella parasuis serovar 5 (strain SH0165) (Haemophilus parasuis)).